The chain runs to 322 residues: Fructose-1,6-bisphosphatase class 1 (322 aa).

4 residues coordinate Mg(2+): E84, D103, L105, and D106. Residues 106–109 (DGSS), N198, and K264 each bind substrate. E270 provides a ligand contact to Mg(2+).

This sequence belongs to the FBPase class 1 family. In terms of assembly, homotetramer. Mg(2+) is required as a cofactor.

Its subcellular location is the cytoplasm. The catalysed reaction is beta-D-fructose 1,6-bisphosphate + H2O = beta-D-fructose 6-phosphate + phosphate. Its pathway is carbohydrate biosynthesis; gluconeogenesis. This is Fructose-1,6-bisphosphatase class 1 from Saccharophagus degradans (strain 2-40 / ATCC 43961 / DSM 17024).